A 414-amino-acid polypeptide reads, in one-letter code: Serine hydroxymethyltransferase (414 aa).

Residues Leu-116 and 120–122 contribute to the (6S)-5,6,7,8-tetrahydrofolate site; that span reads GHL. Residue Lys-225 is modified to N6-(pyridoxal phosphate)lysine. 349–351 provides a ligand contact to (6S)-5,6,7,8-tetrahydrofolate; that stretch reads SPF.

Belongs to the SHMT family. In terms of assembly, homodimer. The cofactor is pyridoxal 5'-phosphate.

It is found in the cytoplasm. It catalyses the reaction (6R)-5,10-methylene-5,6,7,8-tetrahydrofolate + glycine + H2O = (6S)-5,6,7,8-tetrahydrofolate + L-serine. The protein operates within one-carbon metabolism; tetrahydrofolate interconversion. It functions in the pathway amino-acid biosynthesis; glycine biosynthesis; glycine from L-serine: step 1/1. Catalyzes the reversible interconversion of serine and glycine with tetrahydrofolate (THF) serving as the one-carbon carrier. This reaction serves as the major source of one-carbon groups required for the biosynthesis of purines, thymidylate, methionine, and other important biomolecules. Also exhibits THF-independent aldolase activity toward beta-hydroxyamino acids, producing glycine and aldehydes, via a retro-aldol mechanism. The sequence is that of Serine hydroxymethyltransferase from Oenococcus oeni (strain ATCC BAA-331 / PSU-1).